The primary structure comprises 122 residues: Large ribosomal subunit protein bL19 (122 aa).

This sequence belongs to the bacterial ribosomal protein bL19 family.

Its function is as follows. This protein is located at the 30S-50S ribosomal subunit interface and may play a role in the structure and function of the aminoacyl-tRNA binding site. The sequence is that of Large ribosomal subunit protein bL19 from Mycoplasmoides gallisepticum (strain R(low / passage 15 / clone 2)) (Mycoplasma gallisepticum).